The primary structure comprises 295 residues: MQSSLAVNEKVEILAEALPYIRRFHNKTIVIKYGGNAMTEEILKQSFAKDVVLLKLVGMNPVIVHGGGPQIDSMLKRVGKEGVFIQGMRVTDAETMDIVEMILGGLINKEIVNLINRHGGQAVGLTGKDGMFIRAKRMLIKDKEDAEKWINIGQVGEIEYIDPSLIKLLDARDFIPVIAPIGVGEEGESYNINADLVAGRLAETLKAEKLILMTNTPGVLDKNGNLLTGLTASRVDELFADGTISGGMLPKIKSALDAVKNGVKSCHIIDGRVQHALLLEILTDEGVGTLIKSEG.

Residues 67 to 68 (GG), Arg-89, and Asn-191 each bind substrate.

It belongs to the acetylglutamate kinase family. ArgB subfamily.

It is found in the cytoplasm. It catalyses the reaction N-acetyl-L-glutamate + ATP = N-acetyl-L-glutamyl 5-phosphate + ADP. The protein operates within amino-acid biosynthesis; L-arginine biosynthesis; N(2)-acetyl-L-ornithine from L-glutamate: step 2/4. Functionally, catalyzes the ATP-dependent phosphorylation of N-acetyl-L-glutamate. This chain is Acetylglutamate kinase, found in Nitrosomonas eutropha (strain DSM 101675 / C91 / Nm57).